The sequence spans 382 residues: Fimbrial usher domain-containing protein YdeT (382 aa).

The chain is Fimbrial usher domain-containing protein YdeT (ydeT) from Escherichia coli O157:H7.